The chain runs to 400 residues: Probable RNA polymerase sigma factor RfaY (400 aa).

Positions 62–75 (WQRLAQLHQPASFL) match the Polymerase core binding motif. Residues 165–184 (SDAAVRKRLSRARATVRNEL) constitute a DNA-binding region (H-T-H motif).

It belongs to the sigma-70 factor family. ECF subfamily.

Its function is as follows. Sigma factors are initiation factors that promote the attachment of RNA polymerase to specific initiation sites and are then released. This sigma factor is involved in lipopolysaccharide biosynthesis and pathogenicity. This chain is Probable RNA polymerase sigma factor RfaY (rfaY), found in Xanthomonas campestris pv. campestris (strain ATCC 33913 / DSM 3586 / NCPPB 528 / LMG 568 / P 25).